The sequence spans 1049 residues: Protein phosphatase 1 regulatory subunit 12A (1049 aa).

6 ANK repeats span residues 39 to 68, 72 to 101, 105 to 134, 138 to 164, 198 to 227, and 231 to 260; these read DDGA…DINY, DGLT…CINQ, EGWI…SVGV, EGET…RQGV, SGGT…DVNI, and DGWT…DMDV. The disordered stretch occupies residues 302–947; that stretch reads LIETTTTGDN…RPYSRFEKDD (646 aa). The span at 303-315 shows a compositional bias: polar residues; it reads IETTTTGDNNQSV. Basic and acidic residues predominate over residues 319–341; that stretch reads KSKETLLLEPEKTAPRIETLEPE. The segment covering 359-371 has biased composition (acidic residues); that stretch reads SEEEEEEDSESEN. Over residues 378 to 421 the composition is skewed to low complexity; that stretch reads SSVPSSVSNSTPTTAPSSITVTSPTTPSNQVTTPTSPTKKVSTP. Positions 426–436 are enriched in basic and acidic residues; that stretch reads SPKEEDRKDES. A compositionally biased stretch (low complexity) spans 473-484; that stretch reads RSASSPRLSSSL. Residues 485–497 show a composition bias toward basic and acidic residues; that stretch reads DNKDKEKEKEKTR. Positions 545–564 are enriched in polar residues; that stretch reads SDGTASTNRTSSYQRSTSHT. The span at 571-592 shows a compositional bias: low complexity; that stretch reads SSSRDLPAKSSSASSLEPNNSK. Polar residues predominate over residues 593–607; it reads AWQPSSYYQSYSIHR. The span at 620–639 shows a compositional bias: low complexity; that stretch reads SSTSSSTTTTTTTSSVTSPT. Basic and acidic residues predominate over residues 649 to 664; sequence WAEESAEKEKEKEKES. Positions 665-686 are enriched in low complexity; it reads ATVIPTINTAGTTTTTSTTGTV. Basic and acidic residues predominate over residues 702-711; it reads VRDEESESQR. Positions 712 to 722 are enriched in basic residues; it reads KARSRQARQSR. Residues 747-789 show a composition bias toward basic and acidic residues; sequence RPREDEKEEKEKQDKEKQEEKKETETKEDDYRSRYRSFEEKYR. Residues 790–819 show a composition bias toward low complexity; it reads TSLASSTTASSTIPSSSSSSSSSLYSTSSL. The span at 820 to 829 shows a compositional bias: polar residues; it reads NRPNSLTGLT. Residues 835-863 show a composition bias toward basic and acidic residues; the sequence is STRDTDRESDRKEKDEDRDGDDKSQPRSI. Over residues 864 to 875 the composition is skewed to basic residues; that stretch reads RDRRRPREKRRS. Basic and acidic residues-rich tracts occupy residues 890–906 and 934–947; these read PDHP…EPQS and GESR…EKDD.

As to quaternary structure, PP1 comprises a catalytic subunit, and one or several targeting or regulatory subunits. Ppp1r12a mediates binding to myosin.

The protein resides in the cytoplasm. Its function is as follows. Regulates myosin phosphatase activity. The polypeptide is Protein phosphatase 1 regulatory subunit 12A (ppp1r12a) (Danio rerio (Zebrafish)).